Here is a 271-residue protein sequence, read N- to C-terminus: Phosphate import ATP-binding protein PstB 2 (271 aa).

The disordered stretch occupies residues 1–20 (MLTKKPEINTILQTTPDPHS). The 242-residue stretch at 25–266 (MATEDLHVYY…PQEKQTEDYI (242 aa)) folds into the ABC transporter domain. 57–64 (GPSGCGKS) lines the ATP pocket.

The protein belongs to the ABC transporter superfamily. Phosphate importer (TC 3.A.1.7) family. The complex is composed of two ATP-binding proteins (PstB), two transmembrane proteins (PstC and PstA) and a solute-binding protein (PstS).

It is found in the cell membrane. It catalyses the reaction phosphate(out) + ATP + H2O = ADP + 2 phosphate(in) + H(+). Functionally, part of the ABC transporter complex PstSACB involved in phosphate import. Responsible for energy coupling to the transport system. This is Phosphate import ATP-binding protein PstB 2 from Listeria innocua serovar 6a (strain ATCC BAA-680 / CLIP 11262).